A 433-amino-acid chain; its full sequence is Serine hydroxymethyltransferase (433 aa).

Residues Leu-131 and 135-137 (GHL) each bind (6S)-5,6,7,8-tetrahydrofolate. Lys-240 is subject to N6-(pyridoxal phosphate)lysine.

It belongs to the SHMT family. Homodimer. It depends on pyridoxal 5'-phosphate as a cofactor.

It localises to the cytoplasm. It carries out the reaction (6R)-5,10-methylene-5,6,7,8-tetrahydrofolate + glycine + H2O = (6S)-5,6,7,8-tetrahydrofolate + L-serine. It functions in the pathway one-carbon metabolism; tetrahydrofolate interconversion. Its pathway is amino-acid biosynthesis; glycine biosynthesis; glycine from L-serine: step 1/1. In terms of biological role, catalyzes the reversible interconversion of serine and glycine with tetrahydrofolate (THF) serving as the one-carbon carrier. This reaction serves as the major source of one-carbon groups required for the biosynthesis of purines, thymidylate, methionine, and other important biomolecules. Also exhibits THF-independent aldolase activity toward beta-hydroxyamino acids, producing glycine and aldehydes, via a retro-aldol mechanism. This is Serine hydroxymethyltransferase from Bifidobacterium adolescentis (strain ATCC 15703 / DSM 20083 / NCTC 11814 / E194a).